The following is a 654-amino-acid chain: Protein fem-1 homolog A-like (654 aa).

7 ANK repeats span residues 2–31 (DLHT…REEL), 40–70 (GGGT…SVEA), 82–111 (EGAP…SVNR), 115–145 (TNST…DLEV), 149–178 (HGHT…QVNR), 182–211 (KGNT…RMER), and 214–243 (YGMT…SHEQ). Ser-108 bears the Phosphoserine mark. The interval 241–265 (HEQLSGTELPGEGSSQMAGNHCSTP) is disordered. Over residues 253-263 (GSSQMAGNHCS) the composition is skewed to polar residues. TPR repeat units lie at residues 283–317 (VEAL…RHQG) and 375–408 (SYYI…QQNN). ANK repeat units lie at residues 519-561 (NGFT…DPDS) and 565-594 (DNNS…HMDA). At Ser-608 the chain carries Phosphoserine.

The protein belongs to the fem-1 family. Component of a CRL2 E3 ubiquitin-protein ligase complex, also named ECS (Elongin BC-CUL2/5-SOCS-box protein) complex, composed of CUL2, Elongin BC (ELOB and ELOC), RBX1 and substrate-specific adapter FEM1A.

The protein resides in the mitochondrion. It is found in the cytoplasm. The protein operates within protein modification; protein ubiquitination. In terms of biological role, substrate-recognition component of a Cul2-RING (CRL2) E3 ubiquitin-protein ligase complex of the DesCEND (destruction via C-end degrons) pathway, which recognizes a C-degron located at the extreme C terminus of target proteins, leading to their ubiquitination and degradation. The C-degron recognized by the DesCEND pathway is usually a motif of less than ten residues and can be present in full-length proteins, truncated proteins or proteolytically cleaved forms. The CRL2(FEM1A) complex specifically recognizes proteins with an arginine at the C-terminus: recognizes and binds proteins ending with -Lys/Arg-Xaa-Arg and -Lys/Arg-Xaa-Xaa-Arg C-degrons, such as SIL1 or OR51B2, leading to their ubiquitination and degradation. The polypeptide is Protein fem-1 homolog A-like (Mus musculus (Mouse)).